Here is a 219-residue protein sequence, read N- to C-terminus: Ribose-5-phosphate isomerase A (219 aa).

Substrate is bound by residues 28-31 (TGST), 81-84 (DGAD), and 94-97 (KGGG). The active-site Proton acceptor is E103. K121 contacts substrate.

The protein belongs to the ribose 5-phosphate isomerase family. In terms of assembly, homodimer.

The catalysed reaction is aldehydo-D-ribose 5-phosphate = D-ribulose 5-phosphate. It functions in the pathway carbohydrate degradation; pentose phosphate pathway; D-ribose 5-phosphate from D-ribulose 5-phosphate (non-oxidative stage): step 1/1. Catalyzes the reversible conversion of ribose-5-phosphate to ribulose 5-phosphate. The sequence is that of Ribose-5-phosphate isomerase A from Pectobacterium carotovorum subsp. carotovorum (strain PC1).